Reading from the N-terminus, the 645-residue chain is MSVINCEEVKRDEFHTEKYYESYNIFGAHVVTEDEIQGVRFTVWAPHAKAMSVVGDFNEWDYEQHKMLQVTEEGIWSLFIPHIEEGEIYKYAIETLAGDVILKADPYAVYAEVRPNTASVVFDIKGYEWNDKNWIRKKKKKSIYKEAMTVYELHFGSWKKKEDGTLYSYREMVEELIPYVVEHQFTHIEIMPLVEHPYDRSWGYQGTGYYAATSRFGTPHDLMHFVDECHKYGIGVILDWVPGHFCKDAHGLYLFDGTPTYEYKDKDVQENPVWGTVNFDLGKREVRNFLISNALFWMRYFHIDGFRVDAVANMLYWNKEGQEQSNEHAVSFLRELNEAVFAEDEDFLMTAEDSTAWPLVTTPTYEGGLGFNYKWNMGWMNDVLKYMECAPEYRKHIHEKMTFSLLYAYSENFILPLSHDEVVHGKKSLLNKMPGDYWDKFAQLRLLYGYFFTHPGKKLLFMGGEFGQFDEWKDLEDLDWNLHDFEMHRYMHDYFKELIALYKRSKPLWQLDHSPEGFQWIDANNNEQSIFSFIRQGDKQEDALVIVCNFTKATYENYKVGVPDFEYYNEILNSDAQQYGGSGQVNKKRLKTILEPYHNQAAHVEITIPPFGVSILRPVKTRKGSKKQDGSKTKVRSNVTSRGKR.

Asp-309 (nucleophile) is an active-site residue. Glu-352 functions as the Proton donor in the catalytic mechanism. The segment at 619-645 is disordered; that stretch reads VKTRKGSKKQDGSKTKVRSNVTSRGKR. The span at 636-645 shows a compositional bias: polar residues; sequence RSNVTSRGKR.

It belongs to the glycosyl hydrolase 13 family. GlgB subfamily. As to quaternary structure, monomer.

It carries out the reaction Transfers a segment of a (1-&gt;4)-alpha-D-glucan chain to a primary hydroxy group in a similar glucan chain.. It functions in the pathway glycan biosynthesis; glycogen biosynthesis. Functionally, catalyzes the formation of the alpha-1,6-glucosidic linkages in glycogen by scission of a 1,4-alpha-linked oligosaccharide from growing alpha-1,4-glucan chains and the subsequent attachment of the oligosaccharide to the alpha-1,6 position. The protein is 1,4-alpha-glucan branching enzyme GlgB of Bacillus cereus (strain B4264).